A 262-amino-acid polypeptide reads, in one-letter code: Hydroxyethylthiazole kinase (262 aa).

M50 is a binding site for substrate. 2 residues coordinate ATP: R125 and T171. Substrate is bound at residue G198.

Belongs to the Thz kinase family. Requires Mg(2+) as cofactor.

The enzyme catalyses 5-(2-hydroxyethyl)-4-methylthiazole + ATP = 4-methyl-5-(2-phosphooxyethyl)-thiazole + ADP + H(+). The protein operates within cofactor biosynthesis; thiamine diphosphate biosynthesis; 4-methyl-5-(2-phosphoethyl)-thiazole from 5-(2-hydroxyethyl)-4-methylthiazole: step 1/1. In terms of biological role, catalyzes the phosphorylation of the hydroxyl group of 4-methyl-5-beta-hydroxyethylthiazole (THZ). In Escherichia coli O81 (strain ED1a), this protein is Hydroxyethylthiazole kinase.